A 409-amino-acid polypeptide reads, in one-letter code: Divalent metal cation transporter MntH (409 aa).

11 consecutive transmembrane segments (helical) span residues 19–39 (LSLM…GNFA), 46–66 (ASFG…AMLI), 98–118 (WVQA…GAAI), 122–142 (LLLG…TFLI), 155–175 (LVIG…LVFS), 196–216 (AVFL…IYLH), 241–261 (IAMT…AAAF), 290–310 (IFGL…TLAG), 320–340 (FYIP…IVIL), 348–368 (ILVM…VPLL), and 388–408 (ILGK…LVSL).

The protein belongs to the NRAMP family.

It is found in the cell inner membrane. Its function is as follows. H(+)-stimulated, divalent metal cation uptake system. The polypeptide is Divalent metal cation transporter MntH (Yersinia enterocolitica serotype O:8 / biotype 1B (strain NCTC 13174 / 8081)).